The primary structure comprises 468 residues: MSQDTLFDKVWDLHKVSSLPGGSDQIFIGLHLIHEVTSPQAFGALKDKNLKVKFPERTVATVDHIVPTDNQSRPFKDNLAEQMIETLEKNCLDHNIRFFNIGSGNQGIVHVVAPELGLTQPGMTIACGDSHTSTHGAFGSIAFGIGTSQVRDVLASQTIAMNKLKVRQIWCDNKLSKGVYAKDLVLHIINELGVKAGVGFAYEFAGPAIDDLSMEERMTICNMSIEGGARCGYINPDEKTFSYIKNKLCAPKNEHWDKALKWWKSLKSDENSIYDDVVKLNASEVEPTVTWGITPGQSISINQQIPLLDDLSPNDKLVAKEAYEYMSFKPGQLIKDTPVDVCFIGSCTNGRISDLRVAAQVLKDKKVSKNVKAFVVPGSEKVATEAKQEGIDQIFKDSGFQWREPGCSMCLAMNSDKLIGNQVSASSSNRNFKGRQGSPSGRTLLMSPAMVAAAAINGKVSDVREFIN.

Residues Cys-347, Cys-407, and Cys-410 each coordinate [4Fe-4S] cluster. Over residues 424 to 441 (SASSSNRNFKGRQGSPSG) the composition is skewed to polar residues. The disordered stretch occupies residues 424 to 443 (SASSSNRNFKGRQGSPSGRT).

This sequence belongs to the aconitase/IPM isomerase family. LeuC type 1 subfamily. In terms of assembly, heterodimer of LeuC and LeuD. [4Fe-4S] cluster is required as a cofactor.

It catalyses the reaction (2R,3S)-3-isopropylmalate = (2S)-2-isopropylmalate. It participates in amino-acid biosynthesis; L-leucine biosynthesis; L-leucine from 3-methyl-2-oxobutanoate: step 2/4. Its function is as follows. Catalyzes the isomerization between 2-isopropylmalate and 3-isopropylmalate, via the formation of 2-isopropylmaleate. The chain is 3-isopropylmalate dehydratase large subunit from Prochlorococcus marinus (strain MIT 9215).